Reading from the N-terminus, the 225-residue chain is Nucleolar protein 6 (225 aa).

The interval 1-75 (MGSEEDKKLT…GGKGKNGKKG (75 aa)) is disordered. Residues 9 to 20 (LTKKQLKAQQFR) show a composition bias toward basic residues. Basic and acidic residues predominate over residues 21–42 (KSKEEKDQEKDVKKEQAPEGKR). Ser45 carries the post-translational modification Phosphoserine. A compositionally biased stretch (basic residues) spans 56–75 (KKKRKTRRGRGGKGKNGKKG). An RRM domain is found at 78–155 (FIVFVGSLPR…KKINVELTVG (78 aa)). Phosphoserine is present on Ser160. The disordered stretch occupies residues 187–225 (NDGNQKKIAKTTATAAQTSGTDNKPVPAGIHPDRAKLLK).

The protein belongs to the RRM NOP6 family.

It is found in the nucleus. The protein localises to the nucleolus. In terms of biological role, predicted to be involved in rRNA processing. In Saccharomyces cerevisiae (strain ATCC 204508 / S288c) (Baker's yeast), this protein is Nucleolar protein 6 (NOP6).